The primary structure comprises 482 residues: Pyruvate kinase (482 aa).

Arginine 37 contacts substrate. The K(+) site is built by asparagine 39, serine 41, and aspartate 71. 39-42 provides a ligand contact to ATP; that stretch reads NFSH. The ATP site is built by arginine 78 and lysine 160. Glutamate 222 lines the Mg(2+) pocket. The substrate site is built by glycine 245, aspartate 246, and threonine 278. A Mg(2+)-binding site is contributed by aspartate 246.

The protein belongs to the pyruvate kinase family. As to quaternary structure, homotetramer. Mg(2+) is required as a cofactor. It depends on K(+) as a cofactor.

The enzyme catalyses pyruvate + ATP = phosphoenolpyruvate + ADP + H(+). It functions in the pathway carbohydrate degradation; glycolysis; pyruvate from D-glyceraldehyde 3-phosphate: step 5/5. This chain is Pyruvate kinase (ttuE), found in Agrobacterium vitis (Rhizobium vitis).